Here is a 485-residue protein sequence, read N- to C-terminus: Heat stress transcription factor A-1d (485 aa).

Disordered regions lie at residues 1 to 34 (MDVS…SSNA) and 126 to 149 (RRKP…QNSS). Residues 35–129 (PPPFLSKTYD…LLQSITRRKP (95 aa)) mediate DNA binding. Positions 136–146 (GHQRSQHSNGQ) are enriched in low complexity. Residues 152–218 (ACVEVGKFGL…QLMSFLAKAV (67 aa)) are hydrophobic repeat HR-A/B. Disordered regions lie at residues 229–269 (QQQN…GQIV) and 436–461 (PVPD…DKTK). The short motif at 238–252 (NRRISDTSKKRRFKR) is the Bipartite nuclear localization signal element. The segment covering 441–455 (MDSTPVDNETEQEQN) has biased composition (polar residues). The Nuclear export signal motif lies at 472–480 (LLSPETLDL).

It belongs to the HSF family. Class A subfamily. In terms of assembly, homotrimer. Interacts with HSP90-2. Post-translationally, exhibits temperature-dependent phosphorylation.

It is found in the cytoplasm. It localises to the nucleus. Transcriptional regulator that specifically binds DNA sequence 5'-AGAAnnTTCT-3' known as heat shock promoter elements (HSE). The polypeptide is Heat stress transcription factor A-1d (HSFA1D) (Arabidopsis thaliana (Mouse-ear cress)).